Reading from the N-terminus, the 940-residue chain is UvrABC system protein A (940 aa).

31 to 38 lines the ATP pocket; that stretch reads GLSGSGKS. The C4-type zinc-finger motif lies at 253-280; it reads CPICGYSMRELEPRLFSFNNPAGACPTC. ABC transporter domains follow at residues 310-587 and 607-937; these read WDRR…PESL and ANPE…RFLK. Position 640 to 647 (640 to 647) interacts with ATP; sequence GVSGSGKS. The C4-type zinc-finger motif lies at 740–766; sequence CEACQGDGVIKVEMHFLPDIYVPCDQC.

The protein belongs to the ABC transporter superfamily. UvrA family. As to quaternary structure, forms a heterotetramer with UvrB during the search for lesions.

The protein resides in the cytoplasm. The UvrABC repair system catalyzes the recognition and processing of DNA lesions. UvrA is an ATPase and a DNA-binding protein. A damage recognition complex composed of 2 UvrA and 2 UvrB subunits scans DNA for abnormalities. When the presence of a lesion has been verified by UvrB, the UvrA molecules dissociate. Functionally, plays a role in recovery after DNA ADP-ribosylation. The polypeptide is UvrABC system protein A (Escherichia coli O127:H6 (strain E2348/69 / EPEC)).